We begin with the raw amino-acid sequence, 345 residues long: Succinylglutamate desuccinylase (345 aa).

Zn(2+) contacts are provided by histidine 64, glutamate 67, and histidine 161. Residue glutamate 225 is part of the active site.

The protein belongs to the AspA/AstE family. Succinylglutamate desuccinylase subfamily. Zn(2+) is required as a cofactor.

The catalysed reaction is N-succinyl-L-glutamate + H2O = L-glutamate + succinate. It functions in the pathway amino-acid degradation; L-arginine degradation via AST pathway; L-glutamate and succinate from L-arginine: step 5/5. Transforms N(2)-succinylglutamate into succinate and glutamate. The sequence is that of Succinylglutamate desuccinylase from Shewanella pealeana (strain ATCC 700345 / ANG-SQ1).